The primary structure comprises 189 residues: Interferon alpha-5 (189 aa).

The first 23 residues, 1 to 23 (MARLCAFLMVLPVLSYWPTCSLG), serve as a signal peptide directing secretion. Intrachain disulfides connect cysteine 24-cysteine 122 and cysteine 52-cysteine 162. Asparagine 101 carries N-linked (GlcNAc...) asparagine glycosylation.

The protein belongs to the alpha/beta interferon family.

It localises to the secreted. Its function is as follows. Produced by macrophages, IFN-alpha have antiviral activities. Interferon stimulates the production of two enzymes: a protein kinase and an oligoadenylate synthetase. In Mus musculus (Mouse), this protein is Interferon alpha-5 (Ifna5).